We begin with the raw amino-acid sequence, 111 residues long: Large ribosomal subunit protein uL22 (111 aa).

It belongs to the universal ribosomal protein uL22 family. As to quaternary structure, part of the 50S ribosomal subunit.

Its function is as follows. This protein binds specifically to 23S rRNA; its binding is stimulated by other ribosomal proteins, e.g. L4, L17, and L20. It is important during the early stages of 50S assembly. It makes multiple contacts with different domains of the 23S rRNA in the assembled 50S subunit and ribosome. The globular domain of the protein is located near the polypeptide exit tunnel on the outside of the subunit, while an extended beta-hairpin is found that lines the wall of the exit tunnel in the center of the 70S ribosome. The polypeptide is Large ribosomal subunit protein uL22 (Acholeplasma laidlawii).